The sequence spans 507 residues: ATP synthase subunit alpha, chloroplastic (507 aa).

Position 170-177 (170-177 (GDRQTGKT)) interacts with ATP.

It belongs to the ATPase alpha/beta chains family. In terms of assembly, F-type ATPases have 2 components, CF(1) - the catalytic core - and CF(0) - the membrane proton channel. CF(1) has five subunits: alpha(3), beta(3), gamma(1), delta(1), epsilon(1). CF(0) has four main subunits: a, b, b' and c.

The protein resides in the plastid. It localises to the chloroplast thylakoid membrane. It carries out the reaction ATP + H2O + 4 H(+)(in) = ADP + phosphate + 5 H(+)(out). Its function is as follows. Produces ATP from ADP in the presence of a proton gradient across the membrane. The alpha chain is a regulatory subunit. In Solanum bulbocastanum (Wild potato), this protein is ATP synthase subunit alpha, chloroplastic.